Here is a 343-residue protein sequence, read N- to C-terminus: S-adenosylmethionine:tRNA ribosyltransferase-isomerase (343 aa).

The protein belongs to the QueA family. In terms of assembly, monomer.

It is found in the cytoplasm. The enzyme catalyses 7-aminomethyl-7-carbaguanosine(34) in tRNA + S-adenosyl-L-methionine = epoxyqueuosine(34) in tRNA + adenine + L-methionine + 2 H(+). It functions in the pathway tRNA modification; tRNA-queuosine biosynthesis. Its function is as follows. Transfers and isomerizes the ribose moiety from AdoMet to the 7-aminomethyl group of 7-deazaguanine (preQ1-tRNA) to give epoxyqueuosine (oQ-tRNA). This Coxiella burnetii (strain CbuG_Q212) (Coxiella burnetii (strain Q212)) protein is S-adenosylmethionine:tRNA ribosyltransferase-isomerase.